The following is a 387-amino-acid chain: 8-amino-7-oxononanoate synthase (387 aa).

A pyridoxal 5'-phosphate-binding site is contributed by 109–110; it reads GY. His-134 contributes to the substrate binding site. The pyridoxal 5'-phosphate site is built by Ser-182, His-214, and Thr-242. The residue at position 245 (Lys-245) is an N6-(pyridoxal phosphate)lysine. Thr-359 is a substrate binding site.

Belongs to the class-II pyridoxal-phosphate-dependent aminotransferase family. BioF subfamily. In terms of assembly, homodimer. Pyridoxal 5'-phosphate is required as a cofactor.

It catalyses the reaction 6-carboxyhexanoyl-[ACP] + L-alanine + H(+) = (8S)-8-amino-7-oxononanoate + holo-[ACP] + CO2. Its pathway is cofactor biosynthesis; biotin biosynthesis. Catalyzes the decarboxylative condensation of pimeloyl-[acyl-carrier protein] and L-alanine to produce 8-amino-7-oxononanoate (AON), [acyl-carrier protein], and carbon dioxide. The sequence is that of 8-amino-7-oxononanoate synthase from Haemophilus ducreyi (strain 35000HP / ATCC 700724).